The chain runs to 394 residues: Phosphoglycerate kinase (394 aa).

Substrate contacts are provided by residues Asp21–Asn23, Arg36, His59–Arg62, Arg118, and Arg151. Position 183 is a phosphoserine (Ser183). Lys201 contacts ATP. A Phosphothreonine modification is found at Thr299. ATP-binding positions include Glu323 and Gly350–Ser353.

It belongs to the phosphoglycerate kinase family. Monomer.

It is found in the cytoplasm. It carries out the reaction (2R)-3-phosphoglycerate + ATP = (2R)-3-phospho-glyceroyl phosphate + ADP. Its pathway is carbohydrate degradation; glycolysis; pyruvate from D-glyceraldehyde 3-phosphate: step 2/5. The polypeptide is Phosphoglycerate kinase (Geobacillus kaustophilus (strain HTA426)).